The sequence spans 191 residues: uncharacterized protein (191 aa).

A Fe2OG dioxygenase domain is found at glutamate 87 to glycine 184.

This is an uncharacterized protein from Acanthamoeba polyphaga mimivirus (APMV).